We begin with the raw amino-acid sequence, 456 residues long: Signal transduction histidine-protein kinase ArlS (456 aa).

The next 2 helical transmembrane spans lie at 13–33 and 157–177; these read LITT…IIFF and IVAL…SYIF. The region spanning 179–232 is the HAMP domain; the sequence is SQITKPIVTMSNKMNQIRRDGFQNKLELTTNYEETDNLIDTFNEMMYQIEESFN. Positions 240–456 constitute a Histidine kinase domain; sequence DASHELRTPL…TFKISFPVLN (217 aa). A Phosphohistidine; by autocatalysis modification is found at H243.

In terms of processing, autophosphorylated.

The protein localises to the cell membrane. It catalyses the reaction ATP + protein L-histidine = ADP + protein N-phospho-L-histidine.. Member of the two-component regulatory system ArlS/ArlR. ArlS probably functions as a sensor protein kinase which is autophosphorylated at a histidine residue and transfers its phosphate group to ArlR. This chain is Signal transduction histidine-protein kinase ArlS (arlS), found in Staphylococcus epidermidis (strain ATCC 35984 / DSM 28319 / BCRC 17069 / CCUG 31568 / BM 3577 / RP62A).